A 377-amino-acid polypeptide reads, in one-letter code: UDP-N-acetylenolpyruvoylglucosamine reductase (377 aa).

The 168-residue stretch at 48–215 (LGGTPMAAVR…LGITLQLHTD (168 aa)) folds into the FAD-binding PCMH-type domain. The active site involves arginine 193. Catalysis depends on serine 268, which acts as the Proton donor. Glutamate 369 is an active-site residue.

This sequence belongs to the MurB family. The cofactor is FAD.

Its subcellular location is the cytoplasm. The enzyme catalyses UDP-N-acetyl-alpha-D-muramate + NADP(+) = UDP-N-acetyl-3-O-(1-carboxyvinyl)-alpha-D-glucosamine + NADPH + H(+). The protein operates within cell wall biogenesis; peptidoglycan biosynthesis. Cell wall formation. This is UDP-N-acetylenolpyruvoylglucosamine reductase from Corynebacterium diphtheriae (strain ATCC 700971 / NCTC 13129 / Biotype gravis).